The primary structure comprises 142 residues: Succinate dehydrogenase subunit 6, mitochondrial (142 aa).

An N-acetylglycine modification is found at glycine 2.

As to quaternary structure, component of complex II composed of eight subunits in plants: four classical SDH subunits SDH1, SDH2, SDH3 and SDH4 (a flavoprotein (FP), an iron-sulfur protein (IP), and a cytochrome b composed of a large and a small subunit.), as well as four subunits unknown in mitochondria from bacteria and heterotrophic eukaryotes.

Its subcellular location is the mitochondrion inner membrane. It participates in carbohydrate metabolism; tricarboxylic acid cycle. This is Succinate dehydrogenase subunit 6, mitochondrial from Arabidopsis thaliana (Mouse-ear cress).